A 505-amino-acid chain; its full sequence is Maturase K (505 aa).

The protein belongs to the intron maturase 2 family. MatK subfamily.

The protein localises to the plastid. It localises to the chloroplast. In terms of biological role, usually encoded in the trnK tRNA gene intron. Probably assists in splicing its own and other chloroplast group II introns. The polypeptide is Maturase K (Phaulothamnus spinescens (Snake-eyes)).